The primary structure comprises 309 residues: tRNA-cytidine(32) 2-sulfurtransferase (309 aa).

Positions 57–62 match the PP-loop motif motif; sequence SGGKDS. [4Fe-4S] cluster-binding residues include C132, C135, and C223.

The protein belongs to the TtcA family. Homodimer. Mg(2+) serves as cofactor. Requires [4Fe-4S] cluster as cofactor.

The protein localises to the cytoplasm. The catalysed reaction is cytidine(32) in tRNA + S-sulfanyl-L-cysteinyl-[cysteine desulfurase] + AH2 + ATP = 2-thiocytidine(32) in tRNA + L-cysteinyl-[cysteine desulfurase] + A + AMP + diphosphate + H(+). Its pathway is tRNA modification. Catalyzes the ATP-dependent 2-thiolation of cytidine in position 32 of tRNA, to form 2-thiocytidine (s(2)C32). The sulfur atoms are provided by the cysteine/cysteine desulfurase (IscS) system. This chain is tRNA-cytidine(32) 2-sulfurtransferase, found in Variovorax paradoxus (strain S110).